Consider the following 231-residue polypeptide: Somatolactin (231 aa).

A signal peptide spans 1–24; the sequence is MNMMTVKQQGVWAALLWPYLLTAS. Disulfide bonds link C29–C39, C89–C205, and C222–C230. N145 carries N-linked (GlcNAc...) asparagine glycosylation.

It belongs to the somatotropin/prolactin family. Pituitary gland.

The protein localises to the secreted. The sequence is that of Somatolactin from Paralichthys olivaceus (Bastard halibut).